The sequence spans 167 residues: Ribosome maturation factor RimM (167 aa).

The PRC barrel domain occupies 92-166; sequence DDEFYHADLI…RIVADPPEEQ (75 aa).

This sequence belongs to the RimM family. In terms of assembly, binds ribosomal protein uS19.

It is found in the cytoplasm. Its function is as follows. An accessory protein needed during the final step in the assembly of 30S ribosomal subunit, possibly for assembly of the head region. Essential for efficient processing of 16S rRNA. May be needed both before and after RbfA during the maturation of 16S rRNA. It has affinity for free ribosomal 30S subunits but not for 70S ribosomes. In Paracoccus denitrificans (strain Pd 1222), this protein is Ribosome maturation factor RimM.